Here is a 228-residue protein sequence, read N- to C-terminus: UPF0758 protein RALTA_A2508 (228 aa).

The MPN domain maps to 102–224 (GFDSPDSVRS…IRSLAESCER (123 aa)). Residues His173, His175, and Asp186 each contribute to the Zn(2+) site. The short motif at 173-186 (HNHPRGTTAPSQSD) is the JAMM motif element.

The protein belongs to the UPF0758 family.

This Cupriavidus taiwanensis (strain DSM 17343 / BCRC 17206 / CCUG 44338 / CIP 107171 / LMG 19424 / R1) (Ralstonia taiwanensis (strain LMG 19424)) protein is UPF0758 protein RALTA_A2508.